Consider the following 386-residue polypeptide: Protein phosphatase methylesterase 1 (386 aa).

The segment at 1 to 38 (MSALEKSMHLGRLPSRPPLPGSGGSQSGAKMRMGPGRK) is disordered. Residue serine 15 is modified to Phosphoserine. Position 16 is an asymmetric dimethylarginine; alternate (arginine 16). The residue at position 16 (arginine 16) is an Omega-N-methylarginine; alternate. The residue at position 42 (serine 42) is a Phosphoserine. Active-site residues include serine 156 and aspartate 181. The span at 254 to 265 (IIEEEEEDEEGS) shows a compositional bias: acidic residues. The tract at residues 254 to 280 (IIEEEEEDEEGSESISKRKKEDDMETK) is disordered. Basic and acidic residues predominate over residues 268-280 (ISKRKKEDDMETK). Histidine 349 is a catalytic residue.

It belongs to the AB hydrolase superfamily. In terms of assembly, binds PPP2CA and PPP2CB. In terms of processing, phosphorylated by SIK1 following increases in intracellular sodium, leading to dissociation from the protein phosphatase 2A (PP2A) complex and subsequent dephosphorylation of sodium/potassium-transporting ATPase ATP1A1.

The enzyme catalyses [phosphatase 2A protein]-C-terminal L-leucine methyl ester + H2O = [phosphatase 2A protein]-C-terminal L-leucine + methanol + H(+). Functionally, demethylates proteins that have been reversibly carboxymethylated. Demethylates PPP2CB (in vitro) and PPP2CA. Binding to PPP2CA displaces the manganese ion and inactivates the enzyme. The sequence is that of Protein phosphatase methylesterase 1 (PPME1) from Homo sapiens (Human).